The primary structure comprises 182 residues: ATP-dependent protease subunit HslV (182 aa).

Residue Thr-12 is part of the active site. Positions 167, 170, and 173 each coordinate Na(+).

This sequence belongs to the peptidase T1B family. HslV subfamily. As to quaternary structure, a double ring-shaped homohexamer of HslV is capped on each side by a ring-shaped HslU homohexamer. The assembly of the HslU/HslV complex is dependent on binding of ATP.

It is found in the cytoplasm. It carries out the reaction ATP-dependent cleavage of peptide bonds with broad specificity.. With respect to regulation, allosterically activated by HslU binding. Functionally, protease subunit of a proteasome-like degradation complex believed to be a general protein degrading machinery. In Chlorobium phaeovibrioides (strain DSM 265 / 1930) (Prosthecochloris vibrioformis (strain DSM 265)), this protein is ATP-dependent protease subunit HslV.